The sequence spans 287 residues: Bifunctional protein FolD (287 aa).

Residues glycine 169–serine 171 and serine 194 each bind NADP(+).

The protein belongs to the tetrahydrofolate dehydrogenase/cyclohydrolase family. In terms of assembly, homodimer.

The catalysed reaction is (6R)-5,10-methylene-5,6,7,8-tetrahydrofolate + NADP(+) = (6R)-5,10-methenyltetrahydrofolate + NADPH. The enzyme catalyses (6R)-5,10-methenyltetrahydrofolate + H2O = (6R)-10-formyltetrahydrofolate + H(+). It participates in one-carbon metabolism; tetrahydrofolate interconversion. In terms of biological role, catalyzes the oxidation of 5,10-methylenetetrahydrofolate to 5,10-methenyltetrahydrofolate and then the hydrolysis of 5,10-methenyltetrahydrofolate to 10-formyltetrahydrofolate. This is Bifunctional protein FolD from Albidiferax ferrireducens (strain ATCC BAA-621 / DSM 15236 / T118) (Rhodoferax ferrireducens).